A 284-amino-acid polypeptide reads, in one-letter code: Tropomyosin (284 aa).

Residues 1 to 284 (MDAIKKKMLA…DQTFAELAGY (284 aa)) adopt a coiled-coil conformation. Residues 202-213 (NNTKSLEISEQE) are compositionally biased toward polar residues. Positions 202-223 (NNTKSLEISEQEASQREDSYEE) are disordered. Over residues 214–223 (ASQREDSYEE) the composition is skewed to basic and acidic residues.

This sequence belongs to the tropomyosin family. In terms of assembly, homodimer.

Tropomyosin, in association with the troponin complex, plays a central role in the calcium dependent regulation of muscle contraction. This Haliotis rufescens (California red abalone) protein is Tropomyosin.